Consider the following 371-residue polypeptide: 4-hydroxy-3-methylbut-2-en-1-yl diphosphate synthase (flavodoxin) (371 aa).

Residues C270, C273, C305, and E312 each contribute to the [4Fe-4S] cluster site.

Belongs to the IspG family. It depends on [4Fe-4S] cluster as a cofactor.

It catalyses the reaction (2E)-4-hydroxy-3-methylbut-2-enyl diphosphate + oxidized [flavodoxin] + H2O + 2 H(+) = 2-C-methyl-D-erythritol 2,4-cyclic diphosphate + reduced [flavodoxin]. It participates in isoprenoid biosynthesis; isopentenyl diphosphate biosynthesis via DXP pathway; isopentenyl diphosphate from 1-deoxy-D-xylulose 5-phosphate: step 5/6. In terms of biological role, converts 2C-methyl-D-erythritol 2,4-cyclodiphosphate (ME-2,4cPP) into 1-hydroxy-2-methyl-2-(E)-butenyl 4-diphosphate. The polypeptide is 4-hydroxy-3-methylbut-2-en-1-yl diphosphate synthase (flavodoxin) (Shewanella sediminis (strain HAW-EB3)).